We begin with the raw amino-acid sequence, 375 residues long: F420-dependent formate dehydrogenase 2 subunit beta (375 aa).

2 4Fe-4S ferredoxin-type domains span residues 268–291 (PEPEKWDEYWSRCIKCYGCRDVCP) and 320–349 (IRLSHMSFSCINCGQCEDVCPVEIPLAKIY). Residues C280, C283, C286, C290, C329, C332, C335, and C339 each coordinate [4Fe-4S] cluster.

Belongs to the FrhB family. As to quaternary structure, dimer of an alpha (FdhA2) and a beta (FdhB2) subunit. [4Fe-4S] cluster serves as cofactor. The cofactor is FAD. Zn(2+) is required as a cofactor.

The enzyme catalyses oxidized coenzyme F420-(gamma-L-Glu)(n) + formate + 2 H(+) = reduced coenzyme F420-(gamma-L-Glu)(n) + CO2. In terms of biological role, catalyzes the oxidation of formate to carbon dioxide, with coenzyme F420 as the electron acceptor. In vitro can also use methyl viologen as electron acceptor. The sequence is that of F420-dependent formate dehydrogenase 2 subunit beta from Methanococcus maripaludis (strain DSM 14266 / JCM 13030 / NBRC 101832 / S2 / LL).